The following is a 95-amino-acid chain: Aspartyl/glutamyl-tRNA(Asn/Gln) amidotransferase subunit C (95 aa).

This sequence belongs to the GatC family. As to quaternary structure, heterotrimer of A, B and C subunits.

The enzyme catalyses L-glutamyl-tRNA(Gln) + L-glutamine + ATP + H2O = L-glutaminyl-tRNA(Gln) + L-glutamate + ADP + phosphate + H(+). The catalysed reaction is L-aspartyl-tRNA(Asn) + L-glutamine + ATP + H2O = L-asparaginyl-tRNA(Asn) + L-glutamate + ADP + phosphate + 2 H(+). Allows the formation of correctly charged Asn-tRNA(Asn) or Gln-tRNA(Gln) through the transamidation of misacylated Asp-tRNA(Asn) or Glu-tRNA(Gln) in organisms which lack either or both of asparaginyl-tRNA or glutaminyl-tRNA synthetases. The reaction takes place in the presence of glutamine and ATP through an activated phospho-Asp-tRNA(Asn) or phospho-Glu-tRNA(Gln). This chain is Aspartyl/glutamyl-tRNA(Asn/Gln) amidotransferase subunit C, found in Azoarcus sp. (strain BH72).